The sequence spans 700 residues: Elongation factor G 1 (700 aa).

Residues 8–290 form the tr-type G domain; it reads ERYRNIGISA…AVIDYLPSPA (283 aa). GTP contacts are provided by residues 17–24, 88–92, and 142–145; these read AHIDAGKT, DTPGH, and NKMD.

It belongs to the TRAFAC class translation factor GTPase superfamily. Classic translation factor GTPase family. EF-G/EF-2 subfamily.

It localises to the cytoplasm. Catalyzes the GTP-dependent ribosomal translocation step during translation elongation. During this step, the ribosome changes from the pre-translocational (PRE) to the post-translocational (POST) state as the newly formed A-site-bound peptidyl-tRNA and P-site-bound deacylated tRNA move to the P and E sites, respectively. Catalyzes the coordinated movement of the two tRNA molecules, the mRNA and conformational changes in the ribosome. In Bordetella bronchiseptica (strain ATCC BAA-588 / NCTC 13252 / RB50) (Alcaligenes bronchisepticus), this protein is Elongation factor G 1.